We begin with the raw amino-acid sequence, 331 residues long: MPAATTSIFYLPDINIAPWLESPTSPSGQQVVDQVRKACTSTGFFQLTGHGLSQDVVEDIFAASAKFFALPKDVKQGLNFTKNLGFRGYELIGAQVYESDVLPDLKEGFLAGIDLPFEDMRVQNKRFFAGQNVWPPPDVLPYAEFREPVEKYYKSIMQLCFTVMDLVAATLPYGPDVFDEWKSHEPACPLRLLHYPPTPAHVAGKTRQLGSSAHTDFGALTLLLQDSHEGLEVLNHDTGDWVLVPPKPGAFVVNIADMMTMVTVGEYKSSKHRVINRNETEDRYSVVFFMDGNVDYKLRRLDKIGQPIGDDEDLLTVEDYMLGKRNSTYVK.

One can recognise a Fe2OG dioxygenase domain in the interval proline 186–glycine 292. Fe cation is bound by residues histidine 214, aspartate 216, and histidine 272. Arginine 283 contributes to the 2-oxoglutarate binding site.

It belongs to the iron/ascorbate-dependent oxidoreductase family. It depends on Fe(2+) as a cofactor.

It participates in mycotoxin biosynthesis. In terms of biological role, 2-oxoglutarate-dependent dioxygenase; part of the gene cluster that mediates the biosynthesis of the selective antifungal agent ascochitine, an o-quinone methide that plays a possible protective role against other microbial competitors in nature and is considered to be important for pathogenicity of legume-associated Didymella species. The pathway probably begins with the synthesis of a keto-aldehyde intermediate by the ascochitine non-reducing polyketide synthase pksAC from successive condensations of 4 malonyl-CoA units, presumably with a simple acetyl-CoA starter unit. Release of the keto-aldehyde intermediate is consistent with the presence of the C-terminal reductive release domain. The HR-PKS (orf7) probably makes a diketide starter unit which is passed to the non-reducing polyketide synthase pksAC for further extension, producing ascochital and ascochitine. The aldehyde dehydrogenase (orf1), the 2-oxoglutarate-dependent dioxygenase (orf3) and the dehydrogenase (orf9) are probably involved in subsequent oxidations of methyl groups to the carboxylic acid of the heterocyclic ring. The ascochitine gene cluster also includes a gene encoding a short peptide with a cupin domain (orf2) that is often found in secondary metabolite gene clusters and which function has still to be determined. This is 2-oxoglutarate-dependent dioxygenase from Didymella fabae (Leaf and pod spot disease fungus).